The sequence spans 350 residues: Cephaeline 6'-O-methyltransferase CiOMT (350 aa).

5 residues coordinate S-adenosyl-L-methionine: Gly-193, Asp-216, Asp-236, Met-237, and Lys-250. His-254 functions as the Proton acceptor in the catalytic mechanism.

This sequence belongs to the class I-like SAM-binding methyltransferase superfamily. Cation-independent O-methyltransferase family.

It is found in the cytoplasm. Its subcellular location is the cytosol. It carries out the reaction 7'-O-demethylcephaeline + S-adenosyl-L-methionine = cephaeline + S-adenosyl-L-homocysteine + H(+). It catalyses the reaction cephaeline + S-adenosyl-L-methionine = emetine + S-adenosyl-L-homocysteine + H(+). The protein operates within alkaloid biosynthesis. Inhibited by Co(2+), Ni(2+), Zn(2+) and Mn(2+) ions. O-methyltransferase involved in the biosynthesis of ipecac and benzylisoquinoline monoterpenoid-isoquinoline alkaloids natural products, starting by the condensation of dopamine and secologanin, and including emetine and cephaeline, drugs used both as anti-protozoal (e.g. treatment of ameobiasis) and as emetic agents. Catalyzes successively the 7'-O-methylation of 7'-O-demethylcephaeline to produce cephaeline, and its 6'-O-methylation to produce emetine. In Carapichea ipecacuanha (Ipecac), this protein is Cephaeline 6'-O-methyltransferase CiOMT.